A 160-amino-acid polypeptide reads, in one-letter code: Transcription antitermination protein NusB (160 aa).

The protein belongs to the NusB family.

Its function is as follows. Involved in transcription antitermination. Required for transcription of ribosomal RNA (rRNA) genes. Binds specifically to the boxA antiterminator sequence of the ribosomal RNA (rrn) operons. In Chlamydia pneumoniae (Chlamydophila pneumoniae), this protein is Transcription antitermination protein NusB.